Reading from the N-terminus, the 199-residue chain is NAD(P)H dehydrogenase (quinone) (199 aa).

In terms of domain architecture, Flavodoxin-like spans 4-190; it reads VLVLYYSAYG…AGARYQGRRV (187 aa). Residues 10–15 and 78–80 each bind FMN; these read SAYGHI and TRF. Tyr12 serves as a coordination point for NAD(+). Trp98 serves as a coordination point for substrate. FMN contacts are provided by residues 113 to 119 and His134; that span reads STATQHG.

The protein belongs to the WrbA family. FMN is required as a cofactor.

The catalysed reaction is a quinone + NADH + H(+) = a quinol + NAD(+). The enzyme catalyses a quinone + NADPH + H(+) = a quinol + NADP(+). This Methylocella silvestris (strain DSM 15510 / CIP 108128 / LMG 27833 / NCIMB 13906 / BL2) protein is NAD(P)H dehydrogenase (quinone).